A 118-amino-acid polypeptide reads, in one-letter code: Large ribosomal subunit protein uL22 (118 aa).

It belongs to the universal ribosomal protein uL22 family. Part of the 50S ribosomal subunit.

This protein binds specifically to 23S rRNA; its binding is stimulated by other ribosomal proteins, e.g. L4, L17, and L20. It is important during the early stages of 50S assembly. It makes multiple contacts with different domains of the 23S rRNA in the assembled 50S subunit and ribosome. Functionally, the globular domain of the protein is located near the polypeptide exit tunnel on the outside of the subunit, while an extended beta-hairpin is found that lines the wall of the exit tunnel in the center of the 70S ribosome. This is Large ribosomal subunit protein uL22 from Treponema denticola (strain ATCC 35405 / DSM 14222 / CIP 103919 / JCM 8153 / KCTC 15104).